The primary structure comprises 147 residues: Large ribosomal subunit protein uL11 (147 aa).

Belongs to the universal ribosomal protein uL11 family. As to quaternary structure, part of the ribosomal stalk of the 50S ribosomal subunit. Interacts with L10 and the large rRNA to form the base of the stalk. L10 forms an elongated spine to which L12 dimers bind in a sequential fashion forming a multimeric L10(L12)X complex. In terms of processing, one or more lysine residues are methylated.

Its function is as follows. Forms part of the ribosomal stalk which helps the ribosome interact with GTP-bound translation factors. This chain is Large ribosomal subunit protein uL11, found in Parabacteroides distasonis (strain ATCC 8503 / DSM 20701 / CIP 104284 / JCM 5825 / NCTC 11152).